The chain runs to 442 residues: Meiosis-specific with OB domain-containing protein (442 aa).

Positions 167–272 (IINVLAAVKS…EANILLNFIR (106 aa)) form a DNA-binding region, OB.

The protein belongs to the MEIOB family. As to quaternary structure, component of a multiprotein complex with RPA2 and SPATA22. Interacts with SPATA22. Interacts with the complex BRME1:HSF2BP:BRCA2. In terms of tissue distribution, in fetal gonads, specifically expressed in the ovary starting at the 14th weeks post fertilization. In the adult, restricted to testis.

It localises to the cytoplasm. It is found in the nucleus. The protein localises to the chromosome. Functionally, single-stranded DNA-binding protein required for homologous recombination in meiosis I. Required for double strand breaks (DSBs) repair and crossover formation and promotion of faithful and complete synapsis. Not required for the initial loading of recombinases but required to maintain a proper number of RAD51 and DMC1 foci after the zygotene stage. May act by ensuring the stabilization of recombinases, which is required for successful homology search and meiotic recombination. Displays Single-stranded DNA 3'-5' exonuclease activity in vitro. The sequence is that of Meiosis-specific with OB domain-containing protein from Homo sapiens (Human).